Here is a 154-residue protein sequence, read N- to C-terminus: 3-hydroxyacyl-[acyl-carrier-protein] dehydratase FabZ (154 aa).

Histidine 57 is an active-site residue.

Belongs to the thioester dehydratase family. FabZ subfamily.

The protein resides in the cytoplasm. The enzyme catalyses a (3R)-hydroxyacyl-[ACP] = a (2E)-enoyl-[ACP] + H2O. Involved in unsaturated fatty acids biosynthesis. Catalyzes the dehydration of short chain beta-hydroxyacyl-ACPs and long chain saturated and unsaturated beta-hydroxyacyl-ACPs. The polypeptide is 3-hydroxyacyl-[acyl-carrier-protein] dehydratase FabZ (Allorhizobium ampelinum (strain ATCC BAA-846 / DSM 112012 / S4) (Agrobacterium vitis (strain S4))).